The following is a 161-amino-acid chain: Ubiquitin-conjugating enzyme 15 (161 aa).

The 147-residue stretch at 15-161 (IACNRLQKEL…TRWWFHDDKV (147 aa)) folds into the UBC core domain. The active-site Glycyl thioester intermediate is C99.

It belongs to the ubiquitin-conjugating enzyme family.

The catalysed reaction is S-ubiquitinyl-[E1 ubiquitin-activating enzyme]-L-cysteine + [E2 ubiquitin-conjugating enzyme]-L-cysteine = [E1 ubiquitin-activating enzyme]-L-cysteine + S-ubiquitinyl-[E2 ubiquitin-conjugating enzyme]-L-cysteine.. The protein operates within protein modification; protein ubiquitination. In terms of biological role, accepts the ubiquitin from the E1 complex and catalyzes its covalent attachment to other proteins. The sequence is that of Ubiquitin-conjugating enzyme 15 (UBC15) from Arabidopsis thaliana (Mouse-ear cress).